An 823-amino-acid polypeptide reads, in one-letter code: High affinity cAMP-specific and IBMX-insensitive 3',5'-cyclic phosphodiesterase 8A (823 aa).

Positions 1 to 55 (MGCAPSIHTSENRTFSHSDGEDEDVDVDVPGPAPRSIQRWSTAPGLVEPQPRDNG) are disordered. Residues 10–19 (SENRTFSHSD) are compositionally biased toward basic and acidic residues. In terms of domain architecture, PAS spans 209 to 280 (ACNSVFTALE…AINSCVTVDK (72 aa)). In terms of domain architecture, PAC spans 283–325 (QGVYHTQKKNGDNIQQNVKIIPVIGQGGKIRHYVSIIRVCNGN). Residues 338–373 (DSQTDNQAGKHKDRRKHSMDAKAVSSRTSDVSSQRR) are disordered. Ser355 is subject to Phosphoserine; by PKA. 2 positions are modified to phosphoserine: Ser382 and Ser452. Tyr456 is modified (phosphotyrosine). The region spanning 475–814 (SLHDVPPRIA…RYWKGLDEKK (340 aa)) is the PDEase domain. The Proton donor role is filled by His551. The a divalent metal cation site is built by His555, His591, Asp592, and Asp720.

It belongs to the cyclic nucleotide phosphodiesterase family. PDE8 subfamily. Interacts with RAF1. The interaction promotes RAF1 activity. A divalent metal cation is required as a cofactor. In terms of processing, phosphorylated at Ser-355 by PKA under elevated cAMP conditions, this enhances catalytic activity. As to expression, expressed in multiple tissues, with highest levels in testis, followed by liver, heart, skeletal muscle, and kidney. In the testis, expressed specifically in the seminiferous tubules, in postmitotic pachytene spermatocytes. Low expression, if any, in lung, smooth muscle, pancreas, thyroid, thymus, submaxillary gland, spleen, prostate, epididymus, uterus.

It catalyses the reaction 3',5'-cyclic AMP + H2O = AMP + H(+). The protein operates within purine metabolism; 3',5'-cyclic AMP degradation; AMP from 3',5'-cyclic AMP: step 1/1. With respect to regulation, inhibited by dipyridimole. Insensitive to selective PDE inhibitor rolipram and to the non-selective inhibitor, IBMX. Its function is as follows. Hydrolyzes the second messenger cAMP, which is a key regulator of many important physiological processes. May be involved in maintaining basal levels of the cyclic nucleotide and/or in the cAMP regulation of germ cell development. Binding to RAF1 reduces RAF1 'Ser-259' inhibitory-phosphorylation and stimulates RAF1-dependent EGF-activated ERK-signaling. Protects against cell death induced by hydrogen peroxide and staurosporine. The polypeptide is High affinity cAMP-specific and IBMX-insensitive 3',5'-cyclic phosphodiesterase 8A (Pde8a) (Mus musculus (Mouse)).